Consider the following 105-residue polypeptide: Met repressor (105 aa).

Belongs to the MetJ family. Homodimer.

It is found in the cytoplasm. In terms of biological role, this regulatory protein, when combined with SAM (S-adenosylmethionine) represses the expression of the methionine regulon and of enzymes involved in SAM synthesis. This is Met repressor from Sodalis glossinidius (strain morsitans).